Here is a 960-residue protein sequence, read N- to C-terminus: Dynamin-like GTPase OPA1, mitochondrial (960 aa).

The N-terminal 87 residues, 1–87 (MWRLRRAAVA…IKYGYQPRRN (87 aa)), are a transit peptide targeting the mitochondrion. Over 88–96 (FWPARLATR) the chain is Mitochondrial matrix. The chain crosses the membrane as a helical span at residues 97–113 (LLKLRYLILGSAVGGGY). Residues 114 to 770 (TAKKTFDQWK…NAIENMVGPD (657 aa)) are Mitochondrial intermembrane-facing. Positions 210–254 (SDKEKIDQLQEELLHTQLKYQRILERLEKENKELRKLVLQKDDKG) form a coiled coil. Lys228 is modified (N6-acetyllysine). The Dynamin-type G domain maps to 285 to 561 (QDHLPRVVVV…FWKMVRESVE (277 aa)). The tract at residues 295-302 (GDQSAGKT) is G1 motif. GTP-binding residues include Ser298, Gly300, Lys301, Thr302, Ser303, and Gly317. A Mg(2+)-binding site is contributed by Thr302. Positions 321-324 (MMTR) are G2 motif. Positions 323 and 398 each coordinate Mg(2+). Residues 398 to 401 (DLPG) are G3 motif. A G4 motif region spans residues 467 to 470 (TKVD). Positions 468, 470, and 503 each coordinate GTP. Positions 501–504 (VVTG) are G5 motif. Stalk region stretches follow at residues 589–836 (DRNE…IKDT) and 874–928 (CNDV…IKLL). Residues 736–856 (SDKQQWDAAI…KTALNHCNLC (121 aa)) are paddle region. Residues 771 to 781 (WKKRWLYWKNR) lie within the membrane without spanning it. At 782 to 960 (TQEQCVHNET…AFIEALHQEK (179 aa)) the chain is on the mitochondrial intermembrane side. Residues Cys856 and Cys874 are joined by a disulfide bond. Residues 895 to 960 (RQQLTNTEVR…AFIEALHQEK (66 aa)) are a coiled coil.

It belongs to the TRAFAC class dynamin-like GTPase superfamily. Dynamin/Fzo/YdjA family. As to quaternary structure, oligomeric complex consisting of membrane-bound and soluble forms of OPA1. Interacts with RCC1L; RCC1L acts as a guanine nucleotide exchange factor (GEF) for OPA1 by exchanging bound GDP for free GTP. Interacts with CHCHD3 and IMMT; these interactions occur preferentially with soluble OPA1 forms. Interacts with PRELID1. Post-translationally, cleaved by OMA1 or YME1L downstream of the transmembrane region in response to different signals to generate soluble forms. Cleaved by OMA1 at position S1 following stress conditions, generating the short soluble form (Dynamin-like GTPase OPA1, short form; S-OPA1). AFG3L2 is involved in the regulation of OMA1-dependent processing of OPA1. PARL-dependent proteolytic processing releases an antiapoptotic soluble form not required for mitochondrial fusion.

It is found in the mitochondrion inner membrane. The protein localises to the mitochondrion intermembrane space. It carries out the reaction GTP + H2O = GDP + phosphate + H(+). With respect to regulation, activated by guanine nucleotide exchange factor RCC1L. Its function is as follows. Dynamin-related GTPase that is essential for normal mitochondrial morphology by mediating fusion of the mitochondrial inner membranes, regulating cristae morphology and maintaining respiratory chain function. Exists in two forms: the transmembrane, long form (Dynamin-like GTPase OPA1, long form; L-OPA1), which is tethered to the inner mitochondrial membrane, and the short soluble form (Dynamin-like GTPase OPA1, short form; S-OPA1), which results from proteolytic cleavage and localizes in the intermembrane space. Both forms (L-OPA1 and S-OPA1) cooperate to catalyze the fusion of the mitochondrial inner membrane. The equilibrium between L-OPA1 and S-OPA1 is essential: excess levels of S-OPA1, produced by cleavage by OMA1 following loss of mitochondrial membrane potential, lead to an impaired equilibrium between L-OPA1 and S-OPA1, inhibiting mitochondrial fusion. The balance between L-OPA1 and S-OPA1 also influences cristae shape and morphology. Involved in remodeling cristae and the release of cytochrome c during apoptosis. Proteolytic processing by PARL in response to intrinsic apoptotic signals may lead to disassembly of OPA1 oligomers and release of the caspase activator cytochrome C (CYCS) into the mitochondrial intermembrane space. Acts as a regulator of T-helper Th17 cells, which are characterized by cells with fused mitochondria with tight cristae, by mediating mitochondrial membrane remodeling: OPA1 is required for interleukin-17 (IL-17) production. Its role in mitochondrial morphology is required for mitochondrial genome maintenance. Constitutes the transmembrane long form (L-OPA1) that plays a central role in mitochondrial inner membrane fusion and cristae morphology. L-OPA1 and the soluble short form (S-OPA1) form higher-order helical assemblies that coordinate the fusion of mitochondrial inner membranes. Inner membrane-anchored L-OPA1 molecules initiate membrane remodeling by recruiting soluble S-OPA1 to rapidly polymerize into a flexible cylindrical scaffold encaging the mitochondrial inner membrane. Once at the membrane surface, the formation of S-OPA1 helices induce bilayer curvature. OPA1 dimerization through the paddle region, which inserts into cardiolipin-containing membrane, promotes GTP hydrolysis and the helical assembly of a flexible OPA1 lattice on the membrane, which drives membrane curvature and mitochondrial fusion. Plays a role in the maintenance and remodeling of mitochondrial cristae, some invaginations of the mitochondrial inner membrane that provide an increase in the surface area. Probably acts by forming helical filaments at the inside of inner membrane tubes with the shape and dimensions of crista junctions. The equilibrium between L-OPA1 and S-OPA1 influences cristae shape and morphology: increased L-OPA1 levels promote cristae stacking and elongated mitochondria, while increased S-OPA1 levels correlated with irregular cristae packing and round mitochondria shape. Functionally, constitutes the soluble short form (S-OPA1) generated by cleavage by OMA1, which plays a central role in mitochondrial inner membrane fusion and cristae morphology. The transmembrane long form (L-OPA1) and the S-OPA1 form higher-order helical assemblies that coordinate the fusion of mitochondrial inner membranes. Inner membrane-anchored L-OPA1 molecules initiate membrane remodeling by recruiting soluble S-OPA1 to rapidly polymerize into a flexible cylindrical scaffold encaging the mitochondrial inner membrane. Once at the membrane surface, the formation of S-OPA1 helices induce bilayer curvature. OPA1 dimerization through the paddle region, which inserts into cardiolipin-containing membrane, promotes GTP hydrolysis and the helical assembly of a flexible OPA1 lattice on the membrane, which drives membrane curvature and mitochondrial fusion. Excess levels of S-OPA1 produced by cleavage by OMA1 following stress conditions that induce loss of mitochondrial membrane potential, lead to an impaired equilibrium between L-OPA1 and S-OPA1, thereby inhibiting mitochondrial fusion. Involved in mitochondrial safeguard in response to transient mitochondrial membrane depolarization by mediating flickering: cleavage by OMA1 leads to excess production of S-OPA1, preventing mitochondrial hyperfusion. Plays a role in the maintenance and remodeling of mitochondrial cristae, some invaginations of the mitochondrial inner membrane that provide an increase in the surface area. Probably acts by forming helical filaments at the inside of inner membrane tubes with the shape and dimensions of crista junctions. The equilibrium between L-OPA1 and S-OPA1 influences cristae shape and morphology: increased L-OPA1 levels promote cristae stacking and elongated mitochondria, while increased S-OPA1 levels correlated with irregular cristae packing and round mitochondria shape. In Pongo abelii (Sumatran orangutan), this protein is Dynamin-like GTPase OPA1, mitochondrial.